We begin with the raw amino-acid sequence, 108 residues long: UPF0060 membrane protein Mvan_3406 (108 aa).

A run of 4 helical transmembrane segments spans residues L7–V27, G32–F52, V61–D81, and R87–P107.

Belongs to the UPF0060 family.

The protein localises to the cell membrane. The sequence is that of UPF0060 membrane protein Mvan_3406 from Mycolicibacterium vanbaalenii (strain DSM 7251 / JCM 13017 / BCRC 16820 / KCTC 9966 / NRRL B-24157 / PYR-1) (Mycobacterium vanbaalenii).